A 403-amino-acid polypeptide reads, in one-letter code: tRNA(Met) cytidine acetate ligase (403 aa).

ATP-binding positions include 7 to 20 (VVEY…HAYH), G101, N164, and 189 to 190 (RI).

The protein belongs to the TmcAL family.

The protein localises to the cytoplasm. The catalysed reaction is cytidine(34) in elongator tRNA(Met) + acetate + ATP = N(4)-acetylcytidine(34) in elongator tRNA(Met) + AMP + diphosphate. Functionally, catalyzes the formation of N(4)-acetylcytidine (ac(4)C) at the wobble position of elongator tRNA(Met), using acetate and ATP as substrates. First activates an acetate ion to form acetyladenylate (Ac-AMP) and then transfers the acetyl group to tRNA to form ac(4)C34. The sequence is that of tRNA(Met) cytidine acetate ligase from Lysinibacillus sphaericus (strain C3-41).